The following is a 153-amino-acid chain: Large ribosomal subunit protein uL30 (153 aa).

It belongs to the universal ribosomal protein uL30 family. Part of the 50S ribosomal subunit.

This is Large ribosomal subunit protein uL30 from Methanosarcina acetivorans (strain ATCC 35395 / DSM 2834 / JCM 12185 / C2A).